Consider the following 50-residue polypeptide: Sperm protamine P1 (50 aa).

The protein belongs to the protamine P1 family. Testis.

The protein resides in the nucleus. The protein localises to the chromosome. Protamines substitute for histones in the chromatin of sperm during the haploid phase of spermatogenesis. They compact sperm DNA into a highly condensed, stable and inactive complex. The polypeptide is Sperm protamine P1 (PRM1) (Natalus stramineus (Mexican funnel-eared bat)).